We begin with the raw amino-acid sequence, 2842 residues long: Adenomatous polyposis coli protein (2842 aa).

Position 2 is an N-acetylalanine (alanine 2). Residues 2-62 (AAASYDQLLK…GSIEDETMTS (61 aa)) adopt a coiled-coil conformation. Residues serine 105 and serine 109 each carry the phosphoserine modification. Positions 125 to 260 (SRESTGYLEE…ASHEAERQLE (136 aa)) form a coiled coil. The segment at 238–304 (AEAERSSQSK…THSAPRRLTS (67 aa)) is disordered. The span at 239–259 (EAERSSQSKHETASHEAERQL) shows a compositional bias: basic and acidic residues. A compositionally biased stretch (polar residues) spans 268–279 (NLATSGSGQSSA). 7 ARM repeats span residues 451–493 (LMKL…HYSV), 503–545 (LTNL…IASV), 546–589 (LRNL…VLSA), 590–636 (LWNL…GGGI), 637–681 (LRNV…ACGT), 682–723 (LWNL…SAAA), and 724–765 (LRNL…LDAQ). Phosphoserine occurs at positions 742, 746, and 778. Residues 828–877 (VLPSSSSSRGSLDSSRSEKDRSLERERGIGLSTYHSATENPGTSSKRGLQ) are disordered. Low complexity predominate over residues 831-841 (SSSSSRGSLDS). The segment covering 842–855 (SRSEKDRSLERERG) has biased composition (basic and acidic residues). Residues 860-877 (TYHSATENPGTSSKRGLQ) are compositionally biased toward polar residues. Serine 906 bears the Phosphoserine mark. 2 disordered regions span residues 921–942 (RRSS…ESSN) and 956–988 (RSSN…SEDD). Positions 931 to 942 (NTHNFAKSESSN) are enriched in polar residues. Residues 959 to 969 (NDSLNSVTSSD) show a composition bias toward low complexity. Phosphoserine is present on residues serine 985, serine 1036, and serine 1040. Positions 1018–1167 (ELDTPINYSL…TNYSIKYNEE (150 aa)) are interaction with catenins. 4 disordered regions span residues 1058–1078 (IKQN…VYSE), 1092–1166 (GQQE…KYNE), 1188–1249 (SQKP…CKVP), and 1306–1373 (ENDV…PEHY). 2 stretches are compositionally biased toward polar residues: residues 1066–1078 (SRSQ…VYSE) and 1103–1128 (RGTN…QSLC). Over residues 1144–1157 (RYSEEEQHEEEERP) the composition is skewed to basic and acidic residues. Composition is skewed to low complexity over residues 1188–1200 (SQKP…KTPS) and 1209–1223 (NSPS…SSNA). 2 stretches are compositionally biased toward polar residues: residues 1224-1242 (KRQS…QTPK) and 1323-1340 (VSQS…SGLA). A compositionally biased stretch (low complexity) spans 1352 to 1363 (SSGAKSPSKSGA). 5 positions are modified to phosphoserine: serine 1357, serine 1368, serine 1382, serine 1389, and serine 1392. Disordered stretches follow at residues 1398 to 1474 (IASS…VSAA), 1525 to 1568 (PPVQ…SDDD), 1584 to 1609 (KSSR…KPSQ), and 1661 to 1711 (ESPP…IPDL). A Phosphothreonine modification is found at threonine 1435. Over residues 1435–1444 (TPPPPPPPQP) the composition is skewed to pro residues. Over residues 1532–1546 (NGNETEPEQPEESNE) the composition is skewed to acidic residues. The span at 1547 to 1562 (NQDKEVEKPDSEKDLL) shows a compositional bias: basic and acidic residues. At serine 1565 the chain carries Phosphoserine. Residues 1681 to 1700 (EFEKRDTIPTEGRSTDEAQR) show a composition bias toward basic and acidic residues. At serine 1714 the chain carries Phosphoserine. Residues 1748–1762 (VQQASMTSSGTNKNQ) are compositionally biased toward polar residues. Disordered regions lie at residues 1748–1950 (VQQA…EKLQ), 1963–2010 (RNSS…APKS), and 2043–2067 (SSAM…PRKV). Serine 1772 is modified (phosphoserine). Basic and acidic residues-rich tracts occupy residues 1783 to 1792 (YRTRVRKNTD) and 1804 to 1833 (SDNK…DRVR). 3 positions are modified to phosphoserine: serine 1859, serine 1861, and serine 1862. The segment at 1864–1891 (DFDDDDVDLSREKAELRKGKESKDSEAK) is highly charged. Residues 1871–1894 (DLSREKAELRKGKESKDSEAKVTC) show a composition bias toward basic and acidic residues. Over residues 1899-1911 (SSSQQSARKAQAS) the composition is skewed to low complexity. A compositionally biased stretch (polar residues) spans 1927-1936 (EQPTFPQSSK). Residues 1937–1949 (DVPDRGAATDEKL) show a composition bias toward basic and acidic residues. A phosphoserine mark is found at serine 1969 and serine 1971. Residues 2034 to 2058 (EDDLLRECISSAMPKKRRPSRLKGE) are interaction with AXIN1. 6 positions are modified to phosphoserine: serine 2087, serine 2092, serine 2125, serine 2129, serine 2130, and serine 2132. Disordered regions lie at residues 2148 to 2173 (FHLT…PGEK), 2234 to 2641 (PGVR…AESK), and 2664 to 2842 (CPIN…VTSV). Position 2151 is a phosphothreonine (threonine 2151). Positions 2167-2674 (ILKPGEKSTL…PINNPRSGRS (508 aa)) are basic region. Polar residues-rich tracts occupy residues 2257–2272 (ASKS…TSPR) and 2283–2347 (SPIT…QLPR). Phosphoserine occurs at positions 2260, 2270, and 2283. A compositionally biased stretch (low complexity) spans 2348–2369 (TSSPSTASTKSSGSGKMSYTSP). Composition is skewed to polar residues over residues 2370–2411 (GRQL…NGSN) and 2418–2427 (RMSSTKSSGS). The segment covering 2459-2477 (SASFESLSPSSRPDSPTRS) has biased composition (low complexity). Residues serine 2473 and serine 2535 each carry the phosphoserine modification. Residues 2475–2842 (TRSQAQTPVL…HSGSYLVTSV (368 aa)) form an interaction with DLG1 region. Positions 2518–2535 (SDGRPSKRHDIARSHSES) are enriched in basic and acidic residues. Residues 2555 to 2568 (SSSLPRVSTWRRTG) are compositionally biased toward polar residues. Serine 2569 carries the post-translational modification Phosphoserine. A compositionally biased stretch (low complexity) spans 2569–2579 (SSSSILSASSE). Over residues 2580–2592 (SSEKAKSEDEKHV) the composition is skewed to basic and acidic residues. A compositionally biased stretch (low complexity) spans 2629–2638 (TTSSGAASGA). Polar residues-rich tracts occupy residues 2668–2679 (NPRSGRSPTGNT) and 2702–2713 (GKQSVGSGSPVQ). Phosphoserine occurs at positions 2671 and 2674. The segment at 2674 to 2842 (SPTGNTPPVI…HSGSYLVTSV (169 aa)) is interaction with MAPRE1. Threonine 2679 is subject to Phosphothreonine. Phosphoserine occurs at positions 2710 and 2723. Residues 2762 to 2773 (SSSSSSKHSSPS) are compositionally biased toward low complexity. Polar residues predominate over residues 2783–2809 (FNYNPSPRKSSADSTSARPSQIPTPVG). Serine 2788 is modified (phosphoserine). The Microtubule tip localization signal motif lies at 2802–2805 (SQIP). The PDZ-binding signature appears at 2840–2842 (TSV).

It belongs to the adenomatous polyposis coli (APC) family. In terms of assembly, forms homooligomers. Found in a complex consisting of ARHGEF4, APC and CTNNB1. Found in a complex composed of MACF1, APC, AXIN1, CTNNB1 and GSK3B. The complex composed, at least, of APC, CTNNB1 and GSK3B interacts with JPT1; the interaction requires the inactive form of GSK3B (phosphorylated at 'Ser-9'). Interacts with APC2. Interacts with DLG1 (via PDZ domains) and DLG3 (via PDZ domains). Interacts with alpha- and beta-catenins. Interacts with AXIN1 (via RGS domain). Interacts with ARHGEF4 (via N-terminus). Interacts (via C-terminal residues 2674-2843) with MAPRE1 (via C-terminal residues 206-211); the interaction inhibits association with and bundling of F-actin. Interacts with MAPRE2 and MAPRE3 (via C-terminus). Interacts with DIAPH1; DIAPH1 acts as a scaffold protein for MAPRE1 and APC to stabilize microtubules and promote cell migration. Interacts with DIAPH2. Interacts with SCRIB; may mediate APC targeting to adherens junctions of epithelial cells. Interacts with SPATA13 (via N-terminus and SH3 domain). Interacts with ASAP1 (via SH3 domain). Interacts (at the cell membrane) with AMER1 and AMER2 (via ARM repeats). Interacts with KHDRBS1. Interacts with actin; binds both to F-actin and actin filament bundles. Phosphorylated; phosphorylation enhances the F-actin bundling activity. Phosphorylated by GSK3B. Post-translationally, ubiquitinated, leading to its degradation by the proteasome. Ubiquitination is facilitated by Axin. Deubiquitinated by ZRANB1/TRABID.

The protein localises to the cell junction. It localises to the adherens junction. Its subcellular location is the cytoplasm. It is found in the cytoskeleton. The protein resides in the cell projection. The protein localises to the lamellipodium. It localises to the ruffle membrane. Its subcellular location is the cell membrane. Tumor suppressor. Promotes rapid degradation of CTNNB1 and participates in Wnt signaling as a negative regulator. APC activity is correlated with its phosphorylation state. Activates the GEF activity of SPATA13 and ARHGEF4. Plays a role in hepatocyte growth factor (HGF)-induced cell migration. Required for MMP9 up-regulation via the JNK signaling pathway in colorectal tumor cells. Associates with both microtubules and actin filaments, components of the cytoskeleton. Plays a role in mediating the organization of F-actin into ordered bundles. Functions downstream of Rho GTPases and DIAPH1 to selectively stabilize microtubules. Acts as a mediator of ERBB2-dependent stabilization of microtubules at the cell cortex. It is required for the localization of MACF1 to the cell membrane and this localization of MACF1 is critical for its function in microtubule stabilization. The protein is Adenomatous polyposis coli protein (Apc) of Rattus norvegicus (Rat).